A 257-amino-acid polypeptide reads, in one-letter code: Uroplakin-1a (257 aa).

The Cytoplasmic portion of the chain corresponds to 1–13; it reads MASAATEGEKGSP. Residues 14 to 34 form a helical membrane-spanning segment; sequence VVVGLLVVGNIIILLSGLALF. At 35–58 the chain is on the extracellular side; that stretch reads AETVWVTADQYRVYPLMGVSGKDD. A helical transmembrane segment spans residues 59–85; that stretch reads VFAGAWIAIFCGFSFFVVASFGVGAAL. The Cytoplasmic portion of the chain corresponds to 86–90; the sequence is CRRRY. A helical membrane pass occupies residues 91-111; that stretch reads MILTYLLLMLIVYIFECASCI. Residues 112 to 229 are Extracellular-facing; it reads TSYTHRDYMV…HIGHAIDSYT (118 aa). N-linked (GlcNAc...) asparagine glycosylation is present at asparagine 169. The chain crosses the membrane as a helical span at residues 230-251; the sequence is WGISWFGFAILMWTLPVMLIAM. Topologically, residues 252-257 are cytoplasmic; the sequence is YFYTTL.

It belongs to the tetraspanin (TM4SF) family. Homodimer; disulfide-linked. Interacts with uroplakin-2 (UPK2). Binds to uropathogenic E.coli fimH.

It is found in the membrane. Its function is as follows. Component of the asymmetric unit membrane (AUM); a highly specialized biomembrane elaborated by terminally differentiated urothelial cells. May play an important role in normal bladder epithelial physiology, possibly in regulating membrane permeability of superficial umbrella cells or in stabilizing the apical membrane through AUM/cytoskeletal interactions. The protein is Uroplakin-1a (Upk1a) of Mus musculus (Mouse).